A 510-amino-acid chain; its full sequence is uncharacterized protein (510 aa).

The Lumenal portion of the chain corresponds to 1-89 (MTSSLDDIEP…QGQRKKVLLK (89 aa)). Residues 38-76 (AVSQGVPDMDGQTTDSSKDPEPNSEDKKAFPPSSGSFFS) are disordered. Residues 53-66 (SSKDPEPNSEDKKA) show a composition bias toward basic and acidic residues. Residues 67 to 76 (FPPSSGSFFS) are compositionally biased toward low complexity. Residues 90–110 (FVFTNCLLAIICFTMFVLFWG) traverse the membrane as a helical segment. Residues 111-123 (ALYDTSKYLHKVK) are Cytoplasmic-facing. A helical membrane pass occupies residues 124–144 (LLVVIQEPPVVILDNNSSMVV). The Lumenal segment spans residues 145 to 312 (PSISYALPTF…TDRILLAPTQ (168 aa)). Residues 313-333 (IGVVYCLLLTFFQFLLYGPLH) traverse the membrane as a helical segment. At 334–349 (VEMAKVLRPANGLIYR) the chain is on the cytoplasmic side. A helical membrane pass occupies residues 350 to 370 (IAMSWFTFFFASLFFCTTTAI). Over 371–381 (FQVDFTKSFGR) the chain is Lumenal. Residues 382 to 402 (GGFVVYWMSTWLFMLAAGGAN) form a helical membrane-spanning segment. Over 403–416 (ENAVMLVITLGPQY) the chain is Cytoplasmic. The helical transmembrane segment at 417-437 (LGFWILSFVILNIAPSFFPLA) threads the bilayer. Residues 438–474 (LNNNVYRYGYMMPVHNVIDIYRVIFFDVTRRKMGRNY) lie on the Lumenal side of the membrane. The helical transmembrane segment at 475–495 (GILVALIALNTALLPFVGKYA) threads the bilayer. Residues 496-510 (SRKLKQKALVAAKQS) are Cytoplasmic-facing.

This sequence to yeast SNG1.

The protein resides in the endoplasmic reticulum membrane. This is an uncharacterized protein from Saccharomyces cerevisiae (strain ATCC 204508 / S288c) (Baker's yeast).